A 304-amino-acid chain; its full sequence is Syntaxin-132 (304 aa).

At Met1 the chain carries N-acetylmethionine. A disordered region spans residues 1 to 30 (MNDLLKGSFELPRGQSSREGDVELGEQQGG). At 1 to 275 (MNDLLKGSFE…AKSLQKNSRK (275 aa)) the chain is on the cytoplasmic side. 2 coiled-coil regions span residues 34 to 67 (LEDF…ESKS) and 129 to 162 (TLSL…DRRV). One can recognise a t-SNARE coiled-coil homology domain in the interval 204 to 266 (LAEIQERHDA…QSGNTALQRA (63 aa)). A helical; Anchor for type IV membrane protein membrane pass occupies residues 276–296 (WMCIAIIILLIVVAVIVVGVL). Residues 297–304 (KPWKNKSA) lie on the Vesicular side of the membrane.

The protein belongs to the syntaxin family. Part of the t-SNARE complex. As to expression, widely expressed in all tissues throughout plant development.

The protein localises to the cell membrane. Vesicle trafficking protein that functions in the secretory pathway. Acts in coordination with SYP123 to mediate tip-focused membrane trafficking for root hair tip growth. Functions in root hair elongation by forming SNARE complexes with VAMP721,VAMP722 or VAMP724. Involved in cytokinesis. Acts as a cell plate-specific syntaxin, required for the fusion of vesicles at the plane of cell division. Required for secretory trafficking to the plasma membrane during interphase. Involved in the regulation of density of the H(+) ATPase proteins at the plasma membrane of root and shoot in epidermal cells. Modulation of SYP132 expression by auxin affects clathrin-sensitive H(+) ATPase traffic from the plasma membrane, and influences apoplastic acidification and plant growth. This is Syntaxin-132 from Arabidopsis thaliana (Mouse-ear cress).